We begin with the raw amino-acid sequence, 241 residues long: Dephospho-CoA kinase CAB5 (241 aa).

The region spanning 3-211 is the DPCK domain; it reads VVGLTGGIAC…PSKLRTVLEY (209 aa). Position 8 to 15 (8 to 15) interacts with ATP; the sequence is GGIACGKS.

It belongs to the CoaE family.

The protein resides in the endoplasmic reticulum. It localises to the mitochondrion. It is found in the nucleus. The catalysed reaction is 3'-dephospho-CoA + ATP = ADP + CoA + H(+). The protein operates within cofactor biosynthesis; coenzyme A biosynthesis; CoA from (R)-pantothenate: step 5/5. Its function is as follows. Catalyzes the phosphorylation of the 3'-hydroxyl group of dephosphocoenzyme A to form coenzyme A. The polypeptide is Dephospho-CoA kinase CAB5 (CAB5) (Saccharomyces cerevisiae (strain ATCC 204508 / S288c) (Baker's yeast)).